The primary structure comprises 769 residues: Phosphatidylinositol 4-phosphate 5-kinase 8 (769 aa).

MORN repeat units follow at residues 16 to 38 (YSGQ…DGII), 39 to 61 (YEGD…SGAK), 62 to 84 (YEGD…DGSV), 85 to 107 (YAGA…NSDV), 108 to 130 (YDGS…NGNR), 131 to 153 (FIGN…NGDL), 154 to 176 (FNGF…DGGF), and 177 to 198 (YFGT…AGSK). Positions 266 to 289 (PPRDFMHHGPSSKSARSVDSGQSE) are disordered. Residues 276-288 (SSKSARSVDSGQS) are compositionally biased toward polar residues. The region spanning 344 to 765 (WNHYLMLNLQ…RFIDFLLKVF (422 aa)) is the PIPK domain. The interval 725–746 (YNMKKKVEHTCKSMKYDPMTIS) is activation loop.

The catalysed reaction is a 1,2-diacyl-sn-glycero-3-phospho-(1D-myo-inositol 4-phosphate) + ATP = a 1,2-diacyl-sn-glycero-3-phospho-(1D-myo-inositol-4,5-bisphosphate) + ADP + H(+). The protein is Phosphatidylinositol 4-phosphate 5-kinase 8 (PIP5K8) of Arabidopsis thaliana (Mouse-ear cress).